We begin with the raw amino-acid sequence, 262 residues long: Acyl-[acyl-carrier-protein]--UDP-N-acetylglucosamine O-acyltransferase (262 aa).

It belongs to the transferase hexapeptide repeat family. LpxA subfamily. In terms of assembly, homotrimer.

The protein resides in the cytoplasm. It catalyses the reaction a (3R)-hydroxyacyl-[ACP] + UDP-N-acetyl-alpha-D-glucosamine = a UDP-3-O-[(3R)-3-hydroxyacyl]-N-acetyl-alpha-D-glucosamine + holo-[ACP]. It functions in the pathway glycolipid biosynthesis; lipid IV(A) biosynthesis; lipid IV(A) from (3R)-3-hydroxytetradecanoyl-[acyl-carrier-protein] and UDP-N-acetyl-alpha-D-glucosamine: step 1/6. Functionally, involved in the biosynthesis of lipid A, a phosphorylated glycolipid that anchors the lipopolysaccharide to the outer membrane of the cell. This is Acyl-[acyl-carrier-protein]--UDP-N-acetylglucosamine O-acyltransferase from Haemophilus influenzae (strain ATCC 51907 / DSM 11121 / KW20 / Rd).